Reading from the N-terminus, the 550-residue chain is Aldehyde dehydrogenase family 3 member I1, chloroplastic (550 aa).

The N-terminal 59 residues, 1–59 (MTKLLEINHIQTLCFAKGFSPARLNVATSPFRISRRGGGGYCSNACIPYRLKFTCYATL), are a transit peptide targeting the chloroplast. 259 to 264 (GGARVA) serves as a coordination point for NAD(+). Residue glutamate 281 is the Proton acceptor of the active site. Catalysis depends on cysteine 316, which acts as the Nucleophile.

The protein belongs to the aldehyde dehydrogenase family. As to quaternary structure, homodimer and homomultimer.

It localises to the plastid. It is found in the chloroplast. It carries out the reaction an aldehyde + NAD(+) + H2O = a carboxylate + NADH + 2 H(+). Thiol-based regulation. Inactivation after dimerization under oxidizing conditions. Functionally, involved in oxidative stress tolerance by detoxifying reactive aldehydes derived from lipid peroxidation. Medium- to long-chain saturated aldehydes are preferred substrates, while the short-chain aldehyde propanal is a weak substrate. Can use both NAD(+) and NADP(+), but the coenzyme preference is substrate dependent. This chain is Aldehyde dehydrogenase family 3 member I1, chloroplastic (ALDH3I1), found in Arabidopsis thaliana (Mouse-ear cress).